The primary structure comprises 502 residues: MSIRAEEISALIKQQIENYESEIQVSDVGTVIQIGDGIARAHGLDNVMSGELVEFSNGVMGMALNLEENNVGIVILGPYTGIKEGDEVRRTGRIMEVPVGEALIGRVVNPLGQPVDGLGPIETTETRPIESPAPGVMDRKSVHEPLQTGIKAIDALVPIGRGQRELIIGDRQTGKTSIAIDTIINQKDQNMICIYVAIGQKESTVRTVVETLRKHGALDYTIVVTASASQPAPLLFLAPYAGVTMGEYFMYKGQHVLVVYDDLSKQAAAYRELSLLLRRPPGREAYPGDIFYLHSRLLERAAKLSDAKGGGSLTALPFVETQAGDISAYIPTNVISITDGQIFLQSDLFFSGVRPAINAGLSVSRVGGAAQIKAMKKVSGTLRLDLAAYRELEAFAQFGSDLDKATQAKLARGARTVEVLKQDLHAPIPVEKQVAIIYALTHGFLDDIPVEDIRRFEKEFFLWLDQNGQHLLEHIRTTKELPNEEDFNKAIEAFKKTFVVSQ.

The interval V115–D138 is disordered. An ATP-binding site is contributed by G169–T176.

It belongs to the ATPase alpha/beta chains family. F-type ATPases have 2 components, CF(1) - the catalytic core - and CF(0) - the membrane proton channel. CF(1) has five subunits: alpha(3), beta(3), gamma(1), delta(1), epsilon(1). CF(0) has three main subunits: a(1), b(2) and c(9-12). The alpha and beta chains form an alternating ring which encloses part of the gamma chain. CF(1) is attached to CF(0) by a central stalk formed by the gamma and epsilon chains, while a peripheral stalk is formed by the delta and b chains.

Its subcellular location is the cell membrane. The catalysed reaction is ATP + H2O + 4 H(+)(in) = ADP + phosphate + 5 H(+)(out). Functionally, produces ATP from ADP in the presence of a proton gradient across the membrane. The alpha chain is a regulatory subunit. This Geobacillus sp. (strain WCH70) protein is ATP synthase subunit alpha.